Reading from the N-terminus, the 404-residue chain is Caspase b (404 aa).

A propeptide spanning residues 1-171 (MEDITQLLSD…DIYTPRSGTQ (171 aa)) is cleaved from the precursor. Residues 8–80 (LSDVLEDLVE…LRKIKQNERA (73 aa)) form the Pyrin domain. Residues H249 and C296 contribute to the active site. A propeptide spanning residues 301–316 (SSGVLAQDSVFASDSW) is cleaved from the precursor.

It belongs to the peptidase C14A family. In terms of assembly, upon direct LPS-binding, forms large homooligomers, resulting in its activation. These oligomers are often referred to as 'non-canonical inflammasomes'. Heterotetramer that consists of two anti-parallel arranged heterodimers, each one formed by a 20 kDa (p20) and a 10 kDa (p10) subunit. Interacts with caspa. Interacts with pycard; the interaction only occurs in the presence of nlrp1. Component of NLRP1 inflammasomes. Inflammasomes are supramolecular complexes that assemble in the cytosol in response to pathogens and other damage-associated signals and play critical roles in innate immunity and inflammation. The NLRP1 inflammasome is composed of the signal sensor nlrp1, and the adapter pycard (asc), which recruit effector pro-inflammatory caspases caspa and/or caspb. The interaction between nlrp1 and pycard is required for the sequential recruitment of caspa and then caspb. Caspa is preferentially recruited first and this causes the cleavage of pro-il1b into the midformed il1b. This is followed by the recruitment of caspb, which is activated and cleaves the midformed il1b resulting in il1b maturation. The two subunits are derived from the precursor sequence by an autocatalytic mechanism. As to expression, expressed in the spleen, kidney and liver, and highly expressed in the gills and gut.

The protein localises to the inflammasome. It localises to the cytoplasm. It catalyses the reaction Strict requirement for Asp at the P1 position. It has a preferred cleavage sequence of Tyr-Val-Ala-Asp-|- but also cleaves at Asp-Glu-Val-Asp-|-.. Activated by homooligomerization induced by direct binding to cytosolic LPS. Functionally, thiol protease which cleaves IL-1 beta (il1b), releasing the mature cytokine which is involved in a variety of inflammatory processes, and mediates apoptosis. Component of the NLRP1 inflammasome, which plays a crucial role in innate immunity and inflammation. In response to pathogens and other damage-associated signals, recruited to the NLRP1 inflammasome in its precursor form following the recruitment of caspase caspa. Its subsequent activation causes the cleavage of the midformed pro-il1b and results in il1b maturation and secretion in the extracellular milieu. Activated by direct binding to bacterial lipopolysaccharides (LPS), which causes non-canonical inflammasome activation and results in the pyroptosis of infected cells and their extrusion into the gut lumen, as well as in cytokine secretion. Plays a crucial role in the restriction of bacterial infection to intestinal sites. Pyroptosis limits bacterial replication, while cytokine secretion promotes the recruitment and activation of immune cells and triggers mucosal inflammation. Promotes pyroptosis by bacterial infection by E.piscicida. In Danio rerio (Zebrafish), this protein is Caspase b.